We begin with the raw amino-acid sequence, 398 residues long: Phospholipase C (398 aa).

The first 28 residues, 1-28 (MKRKICKALICATLATSLWAGASTKVYA), serve as a signal peptide directing secretion. Zn(2+) is bound by residues Trp29, His39, Asp84, His96, His154, Asp158, His164, His176, and Glu180. Residues 29–278 (WDGKIDGTGT…HDVSEGNDPS (250 aa)) enclose the Zn-dependent PLC domain. The tract at residues 275-283 (NDPSVGKNV) is linker. The PLAT domain occupies 284 to 398 (KELVAYISTS…ISGNSTYNIK (115 aa)). Asp297, Gly299, Thr300, Asp301, Asp321, Asn322, Gly324, Asn325, Asp326, Asp364, and Ala365 together coordinate Ca(2+).

Belongs to the bacterial zinc-metallophospholipase C family. It depends on Ca(2+) as a cofactor. The cofactor is Zn(2+).

The protein localises to the secreted. The catalysed reaction is a 1,2-diacyl-sn-glycero-3-phosphocholine + H2O = phosphocholine + a 1,2-diacyl-sn-glycerol + H(+). Its function is as follows. Bacterial hemolysins are exotoxins that attack blood cell membranes and cause cell rupture. Constitutes an essential virulence factor in gas gangrene. Binds to eukaryotic membranes where it hydrolyzes both phosphatidylcholine and sphingomyelin. The diacylglycerol produced can activate both the arachidonic acid pathway, leading to modulation of the inflammatory response cascade and thrombosis, and protein kinase C, leading to activation of eukaryotic phospholipases and further membrane damage. Acts on human and mouse erythrocytes, but not on rabbit or horse erythrocytes. This chain is Phospholipase C (plc), found in Clostridium perfringens (strain 13 / Type A).